The primary structure comprises 240 residues: Large ribosomal subunit protein uL2 (240 aa).

The segment covering 1 to 11 (MGKRLISQNRG) has biased composition (polar residues). Disordered regions lie at residues 1-28 (MGKR…KGAV) and 206-240 (GGGR…TGRK). 2 stretches are compositionally biased toward basic residues: residues 13–28 (GTPK…KGAV) and 224–240 (SPGR…TGRK).

Belongs to the universal ribosomal protein uL2 family. As to quaternary structure, part of the 50S ribosomal subunit. Forms a bridge to the 30S subunit in the 70S ribosome.

Functionally, one of the primary rRNA binding proteins. Required for association of the 30S and 50S subunits to form the 70S ribosome, for tRNA binding and peptide bond formation. It has been suggested to have peptidyltransferase activity; this is somewhat controversial. Makes several contacts with the 16S rRNA in the 70S ribosome. The sequence is that of Large ribosomal subunit protein uL2 from Methanococcus maripaludis (strain C7 / ATCC BAA-1331).